Reading from the N-terminus, the 116-residue chain is T cell receptor alpha variable 38-2/delta variable 8 (116 aa).

Residues 1 to 21 (MACPGFLWALVISTCLEFSMA) form the signal peptide. The 95-residue stretch at 22–116 (QTVTQSQPEM…AAMYFCAYRS (95 aa)) folds into the Ig-like domain. A disulfide bridge links cysteine 43 with cysteine 112. Asparagine 78 is a glycosylation site (N-linked (GlcNAc...) asparagine).

Alpha-beta TR is a heterodimer composed of an alpha and beta chain; disulfide-linked. The alpha-beta TR is associated with the transmembrane signaling CD3 coreceptor proteins to form the TR-CD3 (TcR or TCR). The assembly of alpha-beta TR heterodimers with CD3 occurs in the endoplasmic reticulum where a single alpha-beta TR heterodimer associates with one CD3D-CD3E heterodimer, one CD3G-CD3E heterodimer and one CD247 homodimer forming a stable octameric structure. CD3D-CD3E and CD3G-CD3E heterodimers preferentially associate with TR alpha and TR beta chains, respectively. The association of the CD247 homodimer is the last step of TcR assembly in the endoplasmic reticulum and is required for transport to the cell surface.

The protein resides in the cell membrane. V region of the variable domain of T cell receptor (TR) alpha chain that participates in the antigen recognition. Alpha-beta T cell receptors are antigen specific receptors which are essential to the immune response and are present on the cell surface of T lymphocytes. Recognize peptide-major histocompatibility (MH) (pMH) complexes that are displayed by antigen presenting cells (APC), a prerequisite for efficient T cell adaptive immunity against pathogens. Binding of alpha-beta TR to pMH complex initiates TR-CD3 clustering on the cell surface and intracellular activation of LCK that phosphorylates the ITAM motifs of CD3G, CD3D, CD3E and CD247 enabling the recruitment of ZAP70. In turn ZAP70 phosphorylates LAT, which recruits numerous signaling molecules to form the LAT signalosome. The LAT signalosome propagates signal branching to three major signaling pathways, the calcium, the mitogen-activated protein kinase (MAPK) kinase and the nuclear factor NF-kappa-B (NF-kB) pathways, leading to the mobilization of transcription factors that are critical for gene expression and essential for T cell growth and differentiation. The T cell repertoire is generated in the thymus, by V-(D)-J rearrangement. This repertoire is then shaped by intrathymic selection events to generate a peripheral T cell pool of self-MH restricted, non-autoaggressive T cells. Post-thymic interaction of alpha-beta TR with the pMH complexes shapes TR structural and functional avidity. In Homo sapiens (Human), this protein is T cell receptor alpha variable 38-2/delta variable 8.